A 486-amino-acid chain; its full sequence is Membrane-bound lytic murein transglycosylase F (486 aa).

Positions 1–26 are cleaved as a signal peptide; it reads MFSPMALRPRCAKWLIVTGLFLMLGA. The segment at 27 to 267 is non-LT domain; sequence CVEKPSTLER…RLKDRYYGHV (241 aa). The tract at residues 268–486 is LT domain; that stretch reads DVLGYVGAYT…TKPPEENPPL (219 aa). Residue E314 is part of the active site. A disordered region spans residues 464–486; that stretch reads VAEGNLHVPGVNKTKPPEENPPL.

It in the N-terminal section; belongs to the bacterial solute-binding protein 3 family. The protein in the C-terminal section; belongs to the transglycosylase Slt family.

The protein resides in the cell outer membrane. The enzyme catalyses Exolytic cleavage of the (1-&gt;4)-beta-glycosidic linkage between N-acetylmuramic acid (MurNAc) and N-acetylglucosamine (GlcNAc) residues in peptidoglycan, from either the reducing or the non-reducing ends of the peptidoglycan chains, with concomitant formation of a 1,6-anhydrobond in the MurNAc residue.. Murein-degrading enzyme that degrades murein glycan strands and insoluble, high-molecular weight murein sacculi, with the concomitant formation of a 1,6-anhydromuramoyl product. Lytic transglycosylases (LTs) play an integral role in the metabolism of the peptidoglycan (PG) sacculus. Their lytic action creates space within the PG sacculus to allow for its expansion as well as for the insertion of various structures such as secretion systems and flagella. In Pseudomonas fluorescens (strain ATCC BAA-477 / NRRL B-23932 / Pf-5), this protein is Membrane-bound lytic murein transglycosylase F.